A 203-amino-acid chain; its full sequence is NAD(P)H dehydrogenase (quinone) (203 aa).

A Flavodoxin-like domain is found at 3 to 194; the sequence is VLIPFYSMYG…AGARYQGKYI (192 aa). Residues 9-14 and 82-84 contribute to the FMN site; these read SMYGHI and TRF. Residue Tyr11 coordinates NAD(+). A substrate-binding site is contributed by Trp102. FMN contacts are provided by residues 117–123 and His138; that span reads SSATQHG.

This sequence belongs to the WrbA family. Requires FMN as cofactor.

The enzyme catalyses a quinone + NADH + H(+) = a quinol + NAD(+). It catalyses the reaction a quinone + NADPH + H(+) = a quinol + NADP(+). This Geobacter metallireducens (strain ATCC 53774 / DSM 7210 / GS-15) protein is NAD(P)H dehydrogenase (quinone).